The chain runs to 308 residues: MMHIKSLPHAHAAATAMSSNCDIVIVAAQPQTTIANNNNNETVTQATHPAHMAAVQQQQQQQQQQQQQHHQQQQQQSSGPPSVPPPPTELPLPFQMHLSGISAEAHSAAQAAAMAAAQAAAAQAAAAEQQQPPPPTSHLTHLTTHSPTTIHSEHYLANGHSEHPGEGNAAVGVGGAVREPEKPFHCTVCDRRFRQLSTLTNHVKIHTGEKPYKCNVCDKTFRQSSTLTNHLKIHTGEKPYNCNFCPKHFRQLSTLANHVKIHTGEKPFECVICKKQFRQSSTLNNHIKIHVMDKVYVPVKIKTEEDEG.

2 disordered regions span residues 50–94 (AHMA…PLPF) and 123–143 (QAAA…THLT). Residues 56-76 (QQQQQQQQQQQQQHHQQQQQQ) show a composition bias toward low complexity. Over residues 81–90 (PSVPPPPTEL) the composition is skewed to pro residues. 4 consecutive C2H2-type zinc fingers follow at residues 184–206 (FHCT…VKIH), 212–234 (YKCN…LKIH), 240–262 (YNCN…VKIH), and 268–290 (FECV…IKIH).

As to expression, found in all tissues examined including the ovary and the fat body.

The protein resides in the nucleus. In terms of biological role, transcriptional repressor that binds specifically to fat body-specific enhancers, namely the adult ADH enhancer (AAE) and the enhancer that controls yolk protein gene expression. This is Adult enhancer factor 1 (Aef1) from Drosophila melanogaster (Fruit fly).